A 189-amino-acid polypeptide reads, in one-letter code: Large ribosomal subunit protein bL9 (189 aa).

The protein belongs to the bacterial ribosomal protein bL9 family.

Functionally, binds to the 23S rRNA. This Brucella melitensis biotype 2 (strain ATCC 23457) protein is Large ribosomal subunit protein bL9.